Reading from the N-terminus, the 963-residue chain is Putative RNA Helicase B962L (963 aa).

One can recognise a Helicase ATP-binding domain in the interval 43 to 229 (IPTSLADRVL…FGIGKENIIL (187 aa)). 56–63 (SRTGSGKS) serves as a coordination point for ATP. The short motif at 167-170 (DEAH) is the DEAH box element. The Helicase C-terminal domain maps to 253–459 (ACETALTIHK…TIKKNKEGVF (207 aa)). A helical membrane pass occupies residues 521–541 (GYFWQAAISDIAIILAVVSVV).

It belongs to the DEAD box helicase family. DEAH subfamily.

The protein resides in the host membrane. It is found in the virion. It catalyses the reaction ATP + H2O = ADP + phosphate + H(+). The chain is Putative RNA Helicase B962L from African swine fever virus (isolate Tick/Malawi/Lil 20-1/1983) (ASFV).